The chain runs to 288 residues: Polyamine aminopropyltransferase (288 aa).

One can recognise a PABS domain in the interval 9–238 (ETLHDQFGQY…GIMTFAWATD (230 aa)). Gln-33 lines the S-methyl-5'-thioadenosine pocket. Spermidine-binding residues include His-64 and Asp-88. S-methyl-5'-thioadenosine contacts are provided by residues Glu-108 and 140 to 141 (DG). The active-site Proton acceptor is Asp-158. 158–161 (DCTD) lines the spermidine pocket. An S-methyl-5'-thioadenosine-binding site is contributed by Pro-165.

Belongs to the spermidine/spermine synthase family. In terms of assembly, homodimer or homotetramer.

Its subcellular location is the cytoplasm. It catalyses the reaction S-adenosyl 3-(methylsulfanyl)propylamine + putrescine = S-methyl-5'-thioadenosine + spermidine + H(+). The protein operates within amine and polyamine biosynthesis; spermidine biosynthesis; spermidine from putrescine: step 1/1. Functionally, catalyzes the irreversible transfer of a propylamine group from the amino donor S-adenosylmethioninamine (decarboxy-AdoMet) to putrescine (1,4-diaminobutane) to yield spermidine. This chain is Polyamine aminopropyltransferase, found in Escherichia fergusonii (strain ATCC 35469 / DSM 13698 / CCUG 18766 / IAM 14443 / JCM 21226 / LMG 7866 / NBRC 102419 / NCTC 12128 / CDC 0568-73).